We begin with the raw amino-acid sequence, 323 residues long: Sphingolipid delta(4)-desaturase DES1 (323 aa).

A run of 2 helical transmembrane segments spans residues 41–61 and 68–88; these read YNLIWVVMLMVAAQLTAFYLV and WVVFWAYVFGSCISHSMTLAI. The Histidine box-1 motif lies at 89-93; that stretch reads HEISH. A helical membrane pass occupies residues 102–122; the sequence is AMWNRWFGIFANLPLGLPYSI. Positions 128 to 132 match the Histidine box-2 motif; it reads HMDHH. A run of 3 helical transmembrane segments spans residues 159-179, 185-205, and 209-229; these read KFIWIVLQPFFYAIRPLCINP, LEIINLLAQLFFDIVIYYLWG, and IFYMLAGSVLGLGLHPISGHF. The short motif at 259-263 is the Histidine box-3 element; it reads HNEHH.

This sequence belongs to the fatty acid desaturase type 1 family. DEGS subfamily. Interacts with RLBP1; the interaction increases synthesis of chromophore-precursors by DEGS1. In terms of tissue distribution, expressed in retina and retinal pigment epithelium by Mueller cells (at protein level).

The protein resides in the endoplasmic reticulum membrane. The catalysed reaction is an N-acylsphinganine + 2 Fe(II)-[cytochrome b5] + O2 + 2 H(+) = an N-acylsphing-4-enine + 2 Fe(III)-[cytochrome b5] + 2 H2O. The enzyme catalyses all-trans-retinol = 11-cis-retinol. It carries out the reaction all-trans-retinol = 9-cis-retinol. It catalyses the reaction all-trans-retinol = 13-cis-retinol. The catalysed reaction is 11-cis-retinol = 13-cis-retinol. The enzyme catalyses 11-cis-retinol = 9-cis-retinol. Has sphingolipid-delta-4-desaturase activity. Converts D-erythro-sphinganine to D-erythro-sphingosine (E-sphing-4-enine). Catalyzes the equilibrium isomerization of retinols. This chain is Sphingolipid delta(4)-desaturase DES1 (DEGS1), found in Gallus gallus (Chicken).